The primary structure comprises 251 residues: Sugar fermentation stimulation protein homolog (251 aa).

Belongs to the SfsA family.

The chain is Sugar fermentation stimulation protein homolog from Prochlorococcus marinus (strain MIT 9313).